The following is a 205-amino-acid chain: Guanylate kinase (205 aa).

A Guanylate kinase-like domain is found at 17–195 (SRLLVLSGPS…AVEAVERLLF (179 aa)). Residue 24–31 (GPSGVGKD) participates in ATP binding.

Belongs to the guanylate kinase family.

The protein localises to the cytoplasm. The enzyme catalyses GMP + ATP = GDP + ADP. Essential for recycling GMP and indirectly, cGMP. The protein is Guanylate kinase of Gloeobacter violaceus (strain ATCC 29082 / PCC 7421).